Reading from the N-terminus, the 360-residue chain is Peptide chain release factor 1 (360 aa).

Gln-236 bears the N5-methylglutamine mark.

The protein belongs to the prokaryotic/mitochondrial release factor family. In terms of processing, methylated by PrmC. Methylation increases the termination efficiency of RF1.

It is found in the cytoplasm. In terms of biological role, peptide chain release factor 1 directs the termination of translation in response to the peptide chain termination codons UAG and UAA. This is Peptide chain release factor 1 from Lactiplantibacillus plantarum (strain ATCC BAA-793 / NCIMB 8826 / WCFS1) (Lactobacillus plantarum).